A 425-amino-acid chain; its full sequence is 2-oxoglutarate and iron-dependent oxygenase JMJD4 (425 aa).

The JmjC domain occupies 141–300 (SRAFPEQDVY…IMWCFLQDEL (160 aa)). Fe cation-binding residues include His188, Asp190, and His268.

It belongs to the JMJD6 family. Fe(2+) is required as a cofactor.

The protein resides in the cytoplasm. It carries out the reaction L-lysyl-[protein] + 2-oxoglutarate + O2 = 4-hydroxy-L-lysyl-[protein] + succinate + CO2. Its function is as follows. Catalyzes the 2-oxoglutarate and iron-dependent C4-lysyl hydroxylation of ETF1 at 'Lys-63' thereby promoting the translational termination efficiency of ETF1. In Gallus gallus (Chicken), this protein is 2-oxoglutarate and iron-dependent oxygenase JMJD4 (JMJD4).